We begin with the raw amino-acid sequence, 1697 residues long: UDP-sugar-dependent glycosyltransferase 52 (1697 aa).

Disordered stretches follow at residues 20–40 and 142–166; these read HSDS…NYEN and STDL…LMIP. The PH domain maps to 234–332; that stretch reads DYVLENYLYK…WYHEINRMQK (99 aa). Disordered stretches follow at residues 573-645 and 707-756; these read FRSK…TTHE and PLDK…KQSQ. Composition is skewed to low complexity over residues 584–628 and 711–722; these read QNSQ…SSSA and QQQQQQQQQQQQ. 2 consecutive GRAM domains span residues 658–793 and 881–948; these read STFH…TKER and IKIK…KKYS. The span at 739–749 shows a compositional bias: acidic residues; it reads TDSDTDSESDF. Disordered stretches follow at residues 1011-1047, 1062-1085, 1110-1130, and 1466-1488; these read SPSI…IHST, DGEN…SNSF, SAQQ…STTT, and EHNN…SNKS. 4 stretches are compositionally biased toward low complexity: residues 1026 to 1047, 1065 to 1084, 1112 to 1130, and 1469 to 1479; these read PPSS…IHST, NNSN…KSNS, QQQQ…STTT, and NNNNNNNNNNN. An FYVE-type zinc finger spans residues 1622 to 1685; that stretch reads SSAPNSCMGC…VCDKCFNDLQ (64 aa). 8 residues coordinate Zn(2+): Cys-1628, Cys-1631, Cys-1647, Cys-1650, Cys-1655, Cys-1658, Cys-1677, and Cys-1680.

It belongs to the glycosyltransferase 28 family.

The enzyme catalyses a sterol + UDP-alpha-D-glucose = a sterol 3-beta-D-glucoside + UDP + H(+). Functionally, involved in the biosynthesis of sterol glucoside. Can use different sterols such as cholesterol, sitosterol, and ergosterol as sugar acceptors. This chain is UDP-sugar-dependent glycosyltransferase 52 (ugt52), found in Dictyostelium discoideum (Social amoeba).